Here is a 122-residue protein sequence, read N- to C-terminus: Flagellar protein FliT (122 aa).

Residues 1-50 form a required for homodimerization region; sequence MTSTVEFINRWQRIALLSQSLLELAQRGEWDLLLQQEVSYLQSIETVMEK. The tract at residues 60–98 is fliD binding; sequence IQDMVAGYIKQTLDNEQLLKGLLQQRLDELSSLIGQSTR.

This sequence belongs to the FliT family. As to quaternary structure, homodimer. Interacts with FliD and FlhC.

It is found in the cytoplasm. Its subcellular location is the cytosol. In terms of biological role, dual-function protein that regulates the transcription of class 2 flagellar operons and that also acts as an export chaperone for the filament-capping protein FliD. As a transcriptional regulator, acts as an anti-FlhDC factor; it directly binds FlhC, thus inhibiting the binding of the FlhC/FlhD complex to class 2 promoters, resulting in decreased expression of class 2 flagellar operons. As a chaperone, effects FliD transition to the membrane by preventing its premature polymerization, and by directing it to the export apparatus. The sequence is that of Flagellar protein FliT from Salmonella gallinarum (strain 287/91 / NCTC 13346).